A 158-amino-acid chain; its full sequence is Ribosome maturation factor RimP (158 aa).

The protein belongs to the RimP family.

The protein resides in the cytoplasm. In terms of biological role, required for maturation of 30S ribosomal subunits. This is Ribosome maturation factor RimP from Pediococcus pentosaceus (strain ATCC 25745 / CCUG 21536 / LMG 10740 / 183-1w).